A 95-amino-acid polypeptide reads, in one-letter code: Oxytetracycline polyketide synthase acyl carrier protein (95 aa).

A Carrier domain is found at Leu-3–Leu-81. Ser-41 is modified (O-(pantetheine 4'-phosphoryl)serine).

In terms of processing, 4'-phosphopantetheine is transferred from CoA to a specific serine of the apo-ACP-like protein.

It participates in antibiotic biosynthesis; oxytetracycline biosynthesis. In terms of biological role, acyl carrier protein. The polypeptide is Oxytetracycline polyketide synthase acyl carrier protein (Streptomyces rimosus).